Here is an 863-residue protein sequence, read N- to C-terminus: Alanine--tRNA ligase (863 aa).

The Zn(2+) site is built by H552, H556, C654, and H658.

The protein belongs to the class-II aminoacyl-tRNA synthetase family. It depends on Zn(2+) as a cofactor.

The protein localises to the cytoplasm. The enzyme catalyses tRNA(Ala) + L-alanine + ATP = L-alanyl-tRNA(Ala) + AMP + diphosphate. In terms of biological role, catalyzes the attachment of alanine to tRNA(Ala) in a two-step reaction: alanine is first activated by ATP to form Ala-AMP and then transferred to the acceptor end of tRNA(Ala). Also edits incorrectly charged Ser-tRNA(Ala) and Gly-tRNA(Ala) via its editing domain. In Nitrosomonas europaea (strain ATCC 19718 / CIP 103999 / KCTC 2705 / NBRC 14298), this protein is Alanine--tRNA ligase.